The sequence spans 118 residues: Large ribosomal subunit protein uL24 (118 aa).

It belongs to the universal ribosomal protein uL24 family. Part of the 50S ribosomal subunit.

In terms of biological role, one of two assembly initiator proteins, it binds directly to the 5'-end of the 23S rRNA, where it nucleates assembly of the 50S subunit. Functionally, one of the proteins that surrounds the polypeptide exit tunnel on the outside of the subunit. The polypeptide is Large ribosomal subunit protein uL24 (Synechococcus sp. (strain WH7803)).